A 151-amino-acid polypeptide reads, in one-letter code: MKSFLTEQQIRVLQLRAKGLKQSEIAEILGTSRANVSILERRALEKIEKARNTLLLWEQINSKISVEVKKGEDIFQVPEKLFKKADELGVKVPYSTAEIIAFLVEHAPIDDRLAKRDFTLFLDREDRLRVSECILEDFDEIGKHEGGKDTI.

It belongs to the Tfx family.

In terms of biological role, putative transcriptional regulator. The polypeptide is Putative transcriptional regulatory protein TK2151 (Thermococcus kodakarensis (strain ATCC BAA-918 / JCM 12380 / KOD1) (Pyrococcus kodakaraensis (strain KOD1))).